We begin with the raw amino-acid sequence, 339 residues long: Annexin A2 (339 aa).

S2 bears the N-acetylserine mark. An S100A10-binding site region spans residues 2–24 (STVHEILCKLSLEGDHSTPPSAY). Y24 is subject to Phosphotyrosine; by SRC. The residue at position 26 (S26) is a Phosphoserine; by PKC. Annexin repeat units follow at residues 33 to 104 (FDAE…GLLK) and 105 to 176 (TPAQ…ALAK). K49 is modified (N6-acetyllysine; alternate). K49 participates in a covalent cross-link: Glycyl lysine isopeptide (Lys-Gly) (interchain with G-Cter in SUMO1); alternate. K49 is covalently cross-linked (Glycyl lysine isopeptide (Lys-Gly) (interchain with G-Cter in SUMO2); alternate). Residue K152 is modified to N6-acetyllysine. At S184 the chain carries Phosphoserine. Annexin repeat units lie at residues 189 to 261 (ELID…NLVQ) and 265 to 336 (NKPL…YLCG). Y199 is subject to Phosphotyrosine. Residue K227 is modified to N6-acetyllysine.

The protein belongs to the annexin family. Heterotetramer containing 2 light chains of S100A10/p11 and 2 heavy chains of ANXA2/p36. Interacts with ATP1B1. Interacts with DYSF. Interacts with COCH. Interacts (via repeat Annexin 1) with PCSK9 (via the C-terminal domain); the interaction inhibits the degradation of LDLR. Interacts with CEACAM1 (via the cytoplasmic domain); this interaction is regulated by phosphorylation of CEACAM1. Interacts with APPL2 and APPL1; targets APPL2 to endosomes and acting in parallel to RAB5A. Interacts with S100A4. May interact with UBAP2. Interacts with PLEKHG4B; this interaction is required for PLEKHG4B localization to cell-cell adhesions. In terms of assembly, (Microbial infection) Interacts with human cytomegalovirus (HCMV). As to quaternary structure, (Microbial infection) Interacts with M.pneumoniae CARDS toxin; CARDS probably uses this protein as a receptor. A portion of internalized CARDS remains associated with intracellular annexin 2. Phosphorylation of Tyr-24 enhances heat stress-induced translocation to the cell surface. In terms of processing, ISGylated.

Its subcellular location is the secreted. It localises to the extracellular space. The protein localises to the extracellular matrix. The protein resides in the basement membrane. It is found in the melanosome. Functionally, calcium-regulated membrane-binding protein whose affinity for calcium is greatly enhanced by anionic phospholipids. It binds two calcium ions with high affinity. May be involved in heat-stress response. Inhibits PCSK9-enhanced LDLR degradation, probably reduces PCSK9 protein levels via a translational mechanism but also competes with LDLR for binding with PCSK9. Binds to endosomes damaged by phagocytosis of particulate wear debris and participates in endosomal membrane stabilization, thereby limiting NLRP3 inflammasome activation. Required for endothelial cell surface plasmin generation and may support fibrinolytic surveillance and neoangiogenesis. (Microbial infection) Binds M.pneumoniae CARDS toxin, probably serves as one receptor for this pathogen. When ANXA2 is down-regulated by siRNA, less toxin binds to human cells and less vacuolization (a symptom of M.pneumoniae infection) is seen. The polypeptide is Annexin A2 (ANXA2) (Homo sapiens (Human)).